The primary structure comprises 309 residues: Putative taste receptor type 2 member 36 (309 aa).

M1 is a topological domain (extracellular). The helical transmembrane segment at 2–22 (ICFLLIILSILVVFAFVLGNF) threads the bilayer. At 23–46 (SNGFIALVNVIDWVKRQKISSADQ) the chain is on the cytoplasmic side. A helical membrane pass occupies residues 47–67 (ILTALVVSRVGLLWVILLHWY). The Extracellular segment spans residues 68 to 79 (SNVLNSALYSSE). Residues 80-100 (VIIFISNAWAIINHFSIWLAT) form a helical membrane-spanning segment. Topologically, residues 101 to 126 (SLSIFYLLKIVNFSRLIFHHLKRKAK) are cytoplasmic. Residues 127-147 (SVVLVIVLGPLVFLVCHLVMK) traverse the membrane as a helical segment. The Extracellular portion of the chain corresponds to 148 to 181 (HTYINVWTKEYEGNVTWKIKLRNAIHLSNLTVST). N161 and N176 each carry an N-linked (GlcNAc...) asparagine glycan. A helical transmembrane segment spans residues 182 to 202 (LANLIPFTLTLISFLLLIYSL). The Cytoplasmic portion of the chain corresponds to 203-229 (CKHLKKMQLHGKGSQDPSTKVHIKALQ). Residues 230 to 250 (TVTSFLLLCAIYFLSMIISVC) traverse the membrane as a helical segment. At 251–259 (NFGRLEKQP) the chain is on the extracellular side. A helical membrane pass occupies residues 260–280 (VFMFCQAIIFSYPSTHPFILI). Topologically, residues 281–309 (LGNKKLKQIFLSVFWQMRYWVKGEKPSSP) are cytoplasmic.

Belongs to the G-protein coupled receptor T2R family.

Its subcellular location is the membrane. In terms of biological role, putative taste receptor which may play a role in the perception of bitterness. This chain is Putative taste receptor type 2 member 36, found in Homo sapiens (Human).